A 394-amino-acid chain; its full sequence is Actin-related protein 2-B (394 aa).

ATP-binding positions include 160–162 (GDG), 214–218 (RMMKE), and 305–310 (GGSTMY).

It belongs to the actin family. ARP2 subfamily. In terms of assembly, component of the Arp2/3 complex composed of actr2/arp2, actr3/arp3, arpc1b, arpc2, arpc3, arpc4 and arpc5.

It is found in the cytoplasm. The protein resides in the cytoskeleton. The protein localises to the cell projection. It localises to the nucleus. Its function is as follows. ATP-binding component of the Arp2/3 complex, a multiprotein complex that mediates actin polymerization upon stimulation by nucleation-promoting factor (NPF). The Arp2/3 complex mediates the formation of branched actin networks in the cytoplasm, providing the force for cell motility. Seems to contact the pointed end of the daughter actin filament. In addition to its role in the cytoplasmic cytoskeleton, the Arp2/3 complex also promotes actin polymerization in the nucleus, thereby regulating gene transcription and repair of damaged DNA. The Arp2/3 complex promotes homologous recombination (HR) repair in response to DNA damage by promoting nuclear actin polymerization, leading to drive motility of double-strand breaks (DSBs). In Danio rerio (Zebrafish), this protein is Actin-related protein 2-B (actr2b).